A 235-amino-acid chain; its full sequence is 1-(5-phosphoribosyl)-5-[(5-phosphoribosylamino)methylideneamino] imidazole-4-carboxamide isomerase (235 aa).

Asp8 acts as the Proton acceptor in catalysis. Asp128 acts as the Proton donor in catalysis.

This sequence belongs to the HisA/HisF family.

It is found in the cytoplasm. The enzyme catalyses 1-(5-phospho-beta-D-ribosyl)-5-[(5-phospho-beta-D-ribosylamino)methylideneamino]imidazole-4-carboxamide = 5-[(5-phospho-1-deoxy-D-ribulos-1-ylimino)methylamino]-1-(5-phospho-beta-D-ribosyl)imidazole-4-carboxamide. Its pathway is amino-acid biosynthesis; L-histidine biosynthesis; L-histidine from 5-phospho-alpha-D-ribose 1-diphosphate: step 4/9. The chain is 1-(5-phosphoribosyl)-5-[(5-phosphoribosylamino)methylideneamino] imidazole-4-carboxamide isomerase from Thermus thermophilus (strain ATCC 27634 / DSM 579 / HB8).